Consider the following 397-residue polypeptide: Oxygen-dependent coproporphyrinogen-III oxidase, chloroplastic (397 aa).

The segment at 76–95 (ESDMGSNVTSNSSSVRGRFE) is disordered. Over residues 79 to 90 (MGSNVTSNSSSV) the composition is skewed to polar residues. The important for dimerization stretch occupies residues 135–144 (VLQDGAVFEK). Ser-185 is a substrate binding site. Residue His-199 is the Proton donor of the active site. Substrate contacts are provided by residues 201–203 (NYR) and 355–360 (GGRIES). The interval 337–372 (YVEFNLVYDRGTTFGLKTGGRIESILVSLPLTARWE) is important for dimerization.

It belongs to the aerobic coproporphyrinogen-III oxidase family. In terms of assembly, homodimer.

It localises to the plastid. The protein resides in the chloroplast. The catalysed reaction is coproporphyrinogen III + O2 + 2 H(+) = protoporphyrinogen IX + 2 CO2 + 2 H2O. Its pathway is porphyrin-containing compound metabolism; protoporphyrin-IX biosynthesis; protoporphyrinogen-IX from coproporphyrinogen-III (O2 route): step 1/1. Functionally, involved in the heme and chlorophyll biosynthesis. Catalyzes the aerobic oxidative decarboxylation of propionate groups of rings A and B of coproporphyrinogen-III to yield the vinyl groups in protoporphyrinogen-IX. This is Oxygen-dependent coproporphyrinogen-III oxidase, chloroplastic (CPX) from Nicotiana tabacum (Common tobacco).